The primary structure comprises 499 residues: MEKYIMSIDQGTTSSRAILFDKEGDIKGVAQREFKQYFPKSGWVEHDANEIWTSVLAVMTEVLNENEINADQIEGIGITNQRETTVIWDKNTGRPIYHAIVWQSRQTQSICHELKEQGHEETFRNKTGLLLDPYFAGTKVKWILDNVDGAREKAENGDLLFGTIDTWLVWKLSGGEAHITDYSNASRTLMYNIYDLQWDDELLDLLNVPKQLLPEVKESSEIYAHTKDYHFFGQEVPISGIAGDQQAALFGQACFERGDVKNTYGTGGFMLMNTGEEPVKSESGLLTTIAYGLDGKVNYALEGSIFVSGSAIQWLRDGLRIINSAPQSENYATRVDSTDNVYFVPAFVGLGTPYWDSEARGAIFGLSRGTEKEHFIRATLESLCYQTRDVMEAMSKDSKIEVNNLRVDGGAVKNNFIMQFQADIVNTAVERPEIQETTALGAAYLAGLAVGFWDSKDEIANRWQLETEFTPQMSEEDRTKLYKGWKKAVEATQVFKLED.

T12 lines the ADP pocket. Positions 12, 13, and 14 each coordinate ATP. Sn-glycerol 3-phosphate is bound at residue T12. Residue R16 coordinates ADP. Sn-glycerol 3-phosphate contacts are provided by R82, E83, and Y134. Glycerol is bound by residues R82, E83, and Y134. H230 bears the Phosphohistidine; by HPr mark. D244 is a sn-glycerol 3-phosphate binding site. Glycerol-binding residues include D244 and Q245. Residues T266 and G309 each contribute to the ADP site. Residues T266, G309, Q313, and G410 each contribute to the ATP site. ADP-binding residues include G410 and N414.

The protein belongs to the FGGY kinase family. In terms of assembly, homotetramer and homodimer (in equilibrium). Post-translationally, the phosphoenolpyruvate-dependent sugar phosphotransferase system (PTS), including enzyme I, and histidine-containing protein (HPr) are required for the phosphorylation, which leads to the activation of the enzyme.

The enzyme catalyses glycerol + ATP = sn-glycerol 3-phosphate + ADP + H(+). It functions in the pathway polyol metabolism; glycerol degradation via glycerol kinase pathway; sn-glycerol 3-phosphate from glycerol: step 1/1. Its activity is regulated as follows. Activated by phosphorylation and inhibited by fructose 1,6-bisphosphate (FBP). Its function is as follows. Key enzyme in the regulation of glycerol uptake and metabolism. Catalyzes the phosphorylation of glycerol to yield sn-glycerol 3-phosphate. The polypeptide is Glycerol kinase (Staphylococcus haemolyticus (strain JCSC1435)).